We begin with the raw amino-acid sequence, 202 residues long: Putative 3-methyladenine DNA glycosylase (202 aa).

It belongs to the DNA glycosylase MPG family.

This chain is Putative 3-methyladenine DNA glycosylase, found in Staphylococcus aureus (strain Mu3 / ATCC 700698).